Consider the following 109-residue polypeptide: U4-lycotoxin-Ls1b (109 aa).

An N-terminal signal peptide occupies residues 1 to 22 (MKVLVLFSVLFLTLFSYSSTEA). Residues 23–44 (IDEFDSDAEDDMLSLMANEQVR) constitute a propeptide that is removed on maturation. The tract at residues 45 to 88 (AKACTPRLHDCSHDRHSCCRGELSKDVCYCFYPEGEDKTEVCSC) is knottin domain. Cystine bridges form between cysteine 48–cysteine 63, cysteine 55–cysteine 72, cysteine 62–cysteine 88, and cysteine 74–cysteine 86. The interval 89 to 108 (QQPKSHKYIEKVVDKAKTVV) is linear cationic cytotoxin domain.

The protein belongs to the neurotoxin 19 (CSTX) family. 05 (U4-Lctx) subfamily. In terms of tissue distribution, expressed by the venom gland.

It is found in the secreted. Its function is as follows. Enhances the high-affinity desensitization of human P2RX3 purinoceptors. The sequence is that of U4-lycotoxin-Ls1b from Lycosa singoriensis (Wolf spider).